Reading from the N-terminus, the 342-residue chain is Protein RecA 1 (342 aa).

Residue 68–75 participates in ATP binding; it reads GNESSGKT.

It belongs to the RecA family.

It is found in the cytoplasm. Functionally, can catalyze the hydrolysis of ATP in the presence of single-stranded DNA, the ATP-dependent uptake of single-stranded DNA by duplex DNA, and the ATP-dependent hybridization of homologous single-stranded DNAs. It interacts with LexA causing its activation and leading to its autocatalytic cleavage. The polypeptide is Protein RecA 1 (Myxococcus xanthus).